The primary structure comprises 219 residues: 7-cyano-7-deazaguanine synthase (219 aa).

Phe10–Leu20 provides a ligand contact to ATP. Cys188, Cys197, Cys200, and Cys203 together coordinate Zn(2+).

The protein belongs to the QueC family. Homodimer. It depends on Zn(2+) as a cofactor.

It carries out the reaction 7-carboxy-7-deazaguanine + NH4(+) + ATP = 7-cyano-7-deazaguanine + ADP + phosphate + H2O + H(+). The protein operates within purine metabolism; 7-cyano-7-deazaguanine biosynthesis. Functionally, catalyzes the ATP-dependent conversion of 7-carboxy-7-deazaguanine (CDG) to 7-cyano-7-deazaguanine (preQ(0)). This chain is 7-cyano-7-deazaguanine synthase, found in Clostridium botulinum (strain ATCC 19397 / Type A).